A 469-amino-acid polypeptide reads, in one-letter code: Autophagy-related protein 18 (469 aa).

WD repeat units lie at residues 188 to 228 (AHRS…KLYQ) and 233 to 272 (TYPSTIYSMSFNLSSTLLCVSSTSDTVHIFRLGGPNNGAS). The L/FRRG motif motif lies at 229–233 (FRRGT). The segment at 285-348 (AASPGQDITG…RQSGSFSNIL (64 aa)) is disordered. Residues 297–306 (RADRWSRSRS) are compositionally biased toward basic and acidic residues. 2 stretches are compositionally biased toward polar residues: residues 307–319 (YDSGNESPGSGSE) and 337–348 (NRRQSGSFSNIL).

Belongs to the WD repeat PROPPIN family. In terms of assembly, component of the PI(3,5)P2 regulatory complex.

It localises to the preautophagosomal structure membrane. Its subcellular location is the vacuole membrane. The protein resides in the endosome membrane. Functionally, the PI(3,5)P2 regulatory complex regulates both the synthesis and turnover of phosphatidylinositol 3,5-bisphosphate (PtdIns(3,5)P2). Necessary for proper vacuole morphology. Plays an important role in osmotically-induced vacuole fragmentation. Required for cytoplasm to vacuole transport (Cvt) vesicle formation, pexophagy and starvation-induced autophagy. Involved in correct ATG9 trafficking to the pre-autophagosomal structure. Might also be involved in premeiotic DNA replication. This is Autophagy-related protein 18 (ATG18) from Pyricularia oryzae (strain 70-15 / ATCC MYA-4617 / FGSC 8958) (Rice blast fungus).